The chain runs to 99 residues: DASH complex subunit DAD1 (99 aa).

The tract at residues 69-99 is disordered; sequence GMNHQTRENTRDENNKISSSDTEDENNNNKI. Residues 73 to 83 show a composition bias toward basic and acidic residues; that stretch reads QTRENTRDENN. Over residues 89 to 99 the composition is skewed to acidic residues; it reads DTEDENNNNKI.

It belongs to the DASH complex DAD1 family. Component of the DASH complex consisting of ASK1, DAD1, DAD2, DAD3, DAD4, DAM1, DUO1, HSK3, SPC19 and SPC34, with a stoichiometry of one copy of each subunit per complex. Multiple DASH complexes oligomerize to form a ring that encircles spindle microtubules and organizes the rod-like NDC80 complexes of the outer kinetochore. DASH complex oligomerization strengthens microtubule attachments. On cytoplasmic microtubules, DASH complexes appear to form patches instead of rings.

The protein resides in the chromosome. Its subcellular location is the centromere. The protein localises to the kinetochore. It is found in the cytoplasm. It localises to the cytoskeleton. The protein resides in the spindle. Its subcellular location is the nucleus. In terms of biological role, component of the DASH complex that connects microtubules with kinetochores and couples microtubule depolymerisation to chromosome movement; it is involved in retrieving kinetochores to the spindle poles before their re-orientation on the spindle in early mitosis and allows microtubule depolymerization to pull chromosomes apart and resist detachment during anaphase. Kinetochores, consisting of a centromere-associated inner segment and a microtubule-contacting outer segment, play a crucial role in chromosome segregation by mediating the physical connection between centromeric DNA and microtubules. Kinetochores also serve as an input point for the spindle assembly checkpoint, which delays anaphase until all chromosomes have bioriented on the mitotic spindle. This is DASH complex subunit DAD1 from Candida albicans (strain SC5314 / ATCC MYA-2876) (Yeast).